Reading from the N-terminus, the 215-residue chain is Enolase-phosphatase E1 (215 aa).

Asp-11 and Glu-13 together coordinate Mg(2+). Substrate-binding positions include 117 to 118 and Lys-151; that span reads SS. Asp-174 provides a ligand contact to Mg(2+).

This sequence belongs to the HAD-like hydrolase superfamily. MasA/MtnC family. Monomer. The cofactor is Mg(2+).

The protein localises to the cytoplasm. The protein resides in the nucleus. It carries out the reaction 5-methylsulfanyl-2,3-dioxopentyl phosphate + H2O = 1,2-dihydroxy-5-(methylsulfanyl)pent-1-en-3-one + phosphate. Its pathway is amino-acid biosynthesis; L-methionine biosynthesis via salvage pathway; L-methionine from S-methyl-5-thio-alpha-D-ribose 1-phosphate: step 3/6. It functions in the pathway amino-acid biosynthesis; L-methionine biosynthesis via salvage pathway; L-methionine from S-methyl-5-thio-alpha-D-ribose 1-phosphate: step 4/6. Its function is as follows. Bifunctional enzyme that catalyzes the enolization of 2,3-diketo-5-methylthiopentyl-1-phosphate (DK-MTP-1-P) into the intermediate 2-hydroxy-3-keto-5-methylthiopentenyl-1-phosphate (HK-MTPenyl-1-P), which is then dephosphorylated to form the acireductone 1,2-dihydroxy-3-keto-5-methylthiopentene (DHK-MTPene). This Schizosaccharomyces japonicus (strain yFS275 / FY16936) (Fission yeast) protein is Enolase-phosphatase E1 (utr4).